Reading from the N-terminus, the 795-residue chain is Protein translocase subunit SecA 2 (795 aa).

ATP contacts are provided by residues Gln-84, 102–106, and Asp-496; that span reads GEGKT.

It belongs to the SecA family. In terms of assembly, monomer and homodimer. Part of the essential Sec protein translocation apparatus which comprises SecA, SecYEG and auxiliary proteins SecDF. Other proteins may also be involved.

The protein resides in the cell membrane. It is found in the cytoplasm. It catalyses the reaction ATP + H2O + cellular proteinSide 1 = ADP + phosphate + cellular proteinSide 2.. Functionally, part of the Sec protein translocase complex. Interacts with the SecYEG preprotein conducting channel. Has a central role in coupling the hydrolysis of ATP to the transfer of proteins into and across the cell membrane, serving as an ATP-driven molecular motor driving the stepwise translocation of polypeptide chains across the membrane. The chain is Protein translocase subunit SecA 2 from Streptococcus agalactiae serotype III (strain NEM316).